Consider the following 128-residue polypeptide: MSKPKRERSLPDNEAKAVARMLRVSPQKLNLVAQLIRGRKASAALADLQFSRKRIAVDVKKCLESAIANAENNHDLDVDDLVVSQAFVGKGIVMKRFAPRGRGRSGRIFKPFAQLTIIVRQVEAEASA.

Belongs to the universal ribosomal protein uL22 family. In terms of assembly, part of the 50S ribosomal subunit.

In terms of biological role, this protein binds specifically to 23S rRNA; its binding is stimulated by other ribosomal proteins, e.g. L4, L17, and L20. It is important during the early stages of 50S assembly. It makes multiple contacts with different domains of the 23S rRNA in the assembled 50S subunit and ribosome. The globular domain of the protein is located near the polypeptide exit tunnel on the outside of the subunit, while an extended beta-hairpin is found that lines the wall of the exit tunnel in the center of the 70S ribosome. The protein is Large ribosomal subunit protein uL22 of Rhodopseudomonas palustris (strain BisA53).